The sequence spans 268 residues: Ribosomal RNA small subunit methyltransferase A (268 aa).

S-adenosyl-L-methionine contacts are provided by asparagine 18, leucine 20, glycine 45, glutamate 66, aspartate 91, and asparagine 112.

The protein belongs to the class I-like SAM-binding methyltransferase superfamily. rRNA adenine N(6)-methyltransferase family. RsmA subfamily.

It localises to the cytoplasm. It catalyses the reaction adenosine(1518)/adenosine(1519) in 16S rRNA + 4 S-adenosyl-L-methionine = N(6)-dimethyladenosine(1518)/N(6)-dimethyladenosine(1519) in 16S rRNA + 4 S-adenosyl-L-homocysteine + 4 H(+). Specifically dimethylates two adjacent adenosines (A1518 and A1519) in the loop of a conserved hairpin near the 3'-end of 16S rRNA in the 30S particle. May play a critical role in biogenesis of 30S subunits. In Shewanella oneidensis (strain ATCC 700550 / JCM 31522 / CIP 106686 / LMG 19005 / NCIMB 14063 / MR-1), this protein is Ribosomal RNA small subunit methyltransferase A.